The following is a 504-amino-acid chain: ATP synthase subunit alpha (504 aa).

Position 170 to 177 (170 to 177) interacts with ATP; that stretch reads GDRQTGKT.

It belongs to the ATPase alpha/beta chains family. In terms of assembly, F-type ATPases have 2 components, CF(1) - the catalytic core - and CF(0) - the membrane proton channel. CF(1) has five subunits: alpha(3), beta(3), gamma(1), delta(1), epsilon(1). CF(0) has four main subunits: a, b, b' and c.

It localises to the cellular thylakoid membrane. The catalysed reaction is ATP + H2O + 4 H(+)(in) = ADP + phosphate + 5 H(+)(out). Its function is as follows. Produces ATP from ADP in the presence of a proton gradient across the membrane. The alpha chain is a regulatory subunit. The chain is ATP synthase subunit alpha from Prochlorococcus marinus (strain MIT 9211).